The chain runs to 673 residues: RAS guanyl-releasing protein 4 (673 aa).

2 stretches are compositionally biased toward basic residues: residues 1–10 and 20–32; these read MNRKDIKRKS and GRGR…RHKT. 2 disordered regions span residues 1–34 and 164–188; these read MNRK…KTCP and LGDA…PGLG. The N-terminal Ras-GEF domain maps to 49–175; it reads GVLSESSCSE…DASSLLSPGG (127 aa). Residues 164-173 are compositionally biased toward low complexity; that stretch reads LGDASSLLSP. The Ras-GEF domain occupies 201 to 432; it reads ETEELAQHLT…YELSYAREPR (232 aa). Residues 466–501 enclose the EF-hand domain; sequence HVEQLVESVFKNYDPEGRGSISLEDFERLSGNFPFA. The Phorbol-ester/DAG-type zinc finger occupies 540–590; it reads LHAFQEVTFRKPTFCHSCSGFLWGVTKQGYRCRDCGLCCHRHCRDQVRVEC. Positions 592 to 633 are disordered; it reads KRPETKGDPGPPGAPVPATSLPPANCGSEESLSYTLSPDPES.

The protein belongs to the RASGRP family. Expressed by mast cells and their progenitors (at protein level). Expressed by dendritic cells. As to expression, expressed in neutrophils.

It is found in the cytoplasm. It localises to the cell membrane. Functions as a cation- and diacylglycerol (DAG)-regulated nucleotide exchange factor activating Ras through the exchange of bound GDP for GTP. In neutrophils, participates in a phospholipase C-activating N-formyl peptide-activated GPCR (G protein-coupled receptor) signaling pathway by promoting Ras-mediated activation of PIK3CG/PI3Kgamma to promote neutrophil functional responses. In CD117(+) dendritic cells and mast cells, participates in an lipopolysaccharide (LPS)-activated signaling pathway that stimulates the production of interferon-gamma and other pro-inflammatory cytokines by natural killer (NK) cells. May function in mast cell differentiation. Does not appear to be required for the development of B-cells, DC-cells, T-cells, or NK-cells. Its function is as follows. Binds diacylglycerol (DAG). Functionally, unable to bind diacylglycerol (DAG). The polypeptide is RAS guanyl-releasing protein 4 (Rasgrp4) (Mus musculus (Mouse)).